Reading from the N-terminus, the 37-residue chain is Large ribosomal subunit protein bL36c (37 aa).

Belongs to the bacterial ribosomal protein bL36 family.

The protein resides in the plastid. It is found in the chloroplast. This chain is Large ribosomal subunit protein bL36c, found in Phalaenopsis aphrodite subsp. formosana (Moth orchid).